Here is a 110-residue protein sequence, read N- to C-terminus: Competence pilus inhibition repressor (110 aa).

In terms of domain architecture, HTH cro/C1-type spans 7 to 61 (VRFLRKRQGWTQQQLADFSHTSKSNISNLENGNQGYSPAILEYLAKAFNCSVSQI). Residues 18–37 (QQQLADFSHTSKSNISNLEN) constitute a DNA-binding region (H-T-H motif).

Its function is as follows. Represses transcription of the PilB-specific inhibitory protein CpiA. In Acinetobacter baylyi (strain ATCC 33305 / BD413 / ADP1), this protein is Competence pilus inhibition repressor.